A 535-amino-acid polypeptide reads, in one-letter code: Dual specificity calcium/calmodulin-dependent 3',5'-cyclic nucleotide phosphodiesterase 1A (535 aa).

Calmodulin-binding regions lie at residues threonine 24 to arginine 44 and glutamate 114 to lysine 137. Residues valine 142–glutamate 522 enclose the PDEase domain. Residue histidine 219 is the Proton donor of the active site. Positions 223, 259, 260, and 366 each coordinate Zn(2+). Aspartate 260 is a Mg(2+) binding site.

It belongs to the cyclic nucleotide phosphodiesterase family. PDE1 subfamily. Homodimer. Interacts with YWHAZ. The cofactor is Zn(2+). It depends on Mg(2+) as a cofactor. In terms of tissue distribution, several tissues, including brain, kidney, testes and heart.

It carries out the reaction a nucleoside 3',5'-cyclic phosphate + H2O = a nucleoside 5'-phosphate + H(+). The catalysed reaction is 3',5'-cyclic GMP + H2O = GMP + H(+). The enzyme catalyses 3',5'-cyclic AMP + H2O = AMP + H(+). Its activity is regulated as follows. Type I PDE are activated by the binding of calmodulin in the presence of Ca(2+). Functionally, calcium/calmodulin-dependent cyclic nucleotide phosphodiesterase with a dual specificity for the second messengers cGMP and cAMP, which are key regulators of many important physiological processes. Has a higher efficiency with cGMP compared to cAMP. The protein is Dual specificity calcium/calmodulin-dependent 3',5'-cyclic nucleotide phosphodiesterase 1A of Homo sapiens (Human).